Consider the following 381-residue polypeptide: GDP-mannose-dependent monoacylated alpha-(1-6)-phosphatidylinositol monomannoside mannosyltransferase (381 aa).

Residues R206, K211, L261, and E298 each coordinate GDP-alpha-D-mannose.

This sequence belongs to the glycosyltransferase group 1 family. Glycosyltransferase 4 subfamily.

It carries out the reaction a 1,2-diacyl-sn-glycero-3-phospho-[alpha-D-mannopyranosyl-(1&lt;-&gt;6)-D-myo-inositol] + GDP-alpha-D-mannose = a 2,6-O-bis(alpha-D-mannopyranosyl)-1-phosphatidyl-1D-myo-inositol + GDP + H(+). The catalysed reaction is a 1,2-diacyl-sn-glycero-3-phospho-[alpha-D-6-acyl-mannopyranosyl-(1&lt;-&gt;6)-D-myo-inositol] + GDP-alpha-D-mannose = a 2-O-(alpha-D-mannosyl)-6-O-(6-O-acyl-alpha-D-mannosyl)-1-phosphatidyl-1D-myo-inositol + GDP + H(+). The protein operates within phospholipid metabolism; phosphatidylinositol metabolism. Functionally, involved in the biosynthesis of phosphatidyl-myo-inositol mannosides (PIM) which are early precursors in the biosynthesis of lipomannans (LM) and lipoarabinomannans (LAM). Catalyzes the addition of a mannosyl residue from GDP-D-mannose (GDP-Man) to the position 6 of a phosphatidyl-myo-inositol bearing an alpha-1,2-linked mannose residue (PIM1) to generate phosphatidyl-myo-inositol bearing alpha-1,2- and alpha-1,6-linked mannose residues (Ac1PIM2). PimB also catalyzes the addition of a mannosyl residue from GDP-Man to the position 6 of phosphatidyl-myo-inositol bearing an acylated alpha-1,2-linked mannose residue (Ac1PIM1) to generate monoacylated phosphatidyl-myo-inositol bearing alpha-1,2- and alpha-1,6-linked mannose residues (Ac1PIM2). The addition of the second mannosyl residue by PimB preferentially occurs before the acylation of the mannosyl residue transferred by PimA. Also able to transfer a mannosyl residue from GDP-Man to the position 6 of a phosphatidyl-myo-inositol (PI), but this reaction is very slow. This Corynebacterium glutamicum (strain ATCC 13032 / DSM 20300 / JCM 1318 / BCRC 11384 / CCUG 27702 / LMG 3730 / NBRC 12168 / NCIMB 10025 / NRRL B-2784 / 534) protein is GDP-mannose-dependent monoacylated alpha-(1-6)-phosphatidylinositol monomannoside mannosyltransferase.